The following is a 356-amino-acid chain: Fructose-1,6-bisphosphatase class 1 1 (356 aa).

Residues Glu-106, Asp-129, Leu-131, and Asp-132 each contribute to the Mg(2+) site. Residues 132–135 (DGSS), Asn-225, Tyr-258, and Lys-288 each bind substrate. Glu-294 contributes to the Mg(2+) binding site.

Belongs to the FBPase class 1 family. In terms of assembly, homotetramer. It depends on Mg(2+) as a cofactor.

The protein resides in the cytoplasm. It catalyses the reaction beta-D-fructose 1,6-bisphosphate + H2O = beta-D-fructose 6-phosphate + phosphate. It functions in the pathway carbohydrate biosynthesis; gluconeogenesis. The polypeptide is Fructose-1,6-bisphosphatase class 1 1 (Salinibacter ruber (strain DSM 13855 / M31)).